The primary structure comprises 383 residues: S-adenosylmethionine synthase (383 aa).

Residue H15 coordinates ATP. D17 provides a ligand contact to Mg(2+). A K(+)-binding site is contributed by E43. L-methionine contacts are provided by E56 and Q99. Residues 99–109 (QSSDINQGVDR) are flexible loop. Residues 164 to 166 (DAK), 230 to 231 (RF), D239, 245 to 246 (RK), A262, and K266 contribute to the ATP site. An L-methionine-binding site is contributed by D239. K270 is an L-methionine binding site.

The protein belongs to the AdoMet synthase family. In terms of assembly, homotetramer; dimer of dimers. Mg(2+) serves as cofactor. It depends on K(+) as a cofactor.

Its subcellular location is the cytoplasm. It carries out the reaction L-methionine + ATP + H2O = S-adenosyl-L-methionine + phosphate + diphosphate. The protein operates within amino-acid biosynthesis; S-adenosyl-L-methionine biosynthesis; S-adenosyl-L-methionine from L-methionine: step 1/1. In terms of biological role, catalyzes the formation of S-adenosylmethionine (AdoMet) from methionine and ATP. The overall synthetic reaction is composed of two sequential steps, AdoMet formation and the subsequent tripolyphosphate hydrolysis which occurs prior to release of AdoMet from the enzyme. The polypeptide is S-adenosylmethionine synthase (Mannheimia succiniciproducens (strain KCTC 0769BP / MBEL55E)).